We begin with the raw amino-acid sequence, 430 residues long: Enolase (430 aa).

The interval 1–140 (MPYIVDVYAR…YQYLGGFNSK (140 aa)) is sufficient for secretion. Threonine 141 carries the phosphothreonine modification. Residue glutamine 163 participates in (2R)-2-phosphoglycerate binding. The active-site Proton donor is glutamate 205. Aspartate 242 is a binding site for Mg(2+). Serine 259 is modified (phosphoserine). The residue at position 281 (tyrosine 281) is a Phosphotyrosine. The Mg(2+) site is built by glutamate 287 and aspartate 314. Position 325 is a phosphoserine (serine 325). Residues lysine 339, arginine 368, serine 369, and lysine 390 each contribute to the (2R)-2-phosphoglycerate site. The Proton acceptor role is filled by lysine 339.

The protein belongs to the enolase family. Homooctamer. Component of the RNA degradosome complex composed of rny, rnjA, rnjB, pnp, pfkA and eno (although rnjA and rnjB's presence is controversial). Mg(2+) is required as a cofactor. Phosphorylated during sporulation.

Its subcellular location is the cytoplasm. It is found in the secreted. The protein localises to the cell surface. The catalysed reaction is (2R)-2-phosphoglycerate = phosphoenolpyruvate + H2O. Its pathway is carbohydrate degradation; glycolysis; pyruvate from D-glyceraldehyde 3-phosphate: step 4/5. Its activity is regulated as follows. Covalent binding to the substrate (probably 2-PG) at Lys-339 of a small fraction of enolase causes inactivation of the enzyme, and possibly serves as a signal for the export of the protein. Citrate acts as a non-competitive inhibitor for both forward and reverse reactions, probably by chelating Mg(2+). Functionally, catalyzes the reversible conversion of 2-phosphoglycerate (2-PG) into phosphoenolpyruvate (PEP). It is essential for the degradation of carbohydrates via glycolysis. Its function is as follows. A component of the RNA degradosome, a multi-enzyme complex involved in RNA processing and messenger RNA degradation. The sequence is that of Enolase from Bacillus subtilis (strain 168).